The chain runs to 245 residues: Collagen triple helix repeat-containing protein 1 (245 aa).

Residues 1–32 form the signal peptide; sequence MHPQGRAAPPQLLLGLFLVLLLLLQLSAPISA. Residues 59-92 enclose the Collagen-like domain; sequence QGPAGVPGRDGSPGANGIPGTPGIPGRDGFKGEK. A disordered region spans residues 64–87; the sequence is VPGRDGSPGANGIPGTPGIPGRDG. Asparagine 188 carries N-linked (GlcNAc...) asparagine glycosylation.

In terms of processing, N-glycosylated.

Its subcellular location is the secreted. It localises to the extracellular space. The protein resides in the extracellular matrix. May act as a negative regulator of collagen matrix deposition. The polypeptide is Collagen triple helix repeat-containing protein 1 (Cthrc1) (Mus musculus (Mouse)).